Here is a 275-residue protein sequence, read N- to C-terminus: Autophagy protein 5 (275 aa).

Methionine 1 is subject to N-acetylmethionine. A Glycyl lysine isopeptide (Lys-Gly) (interchain with G-Cter in ATG12) cross-link involves residue lysine 130.

This sequence belongs to the ATG5 family. Forms a conjugate with ATG12. Part of the minor complex composed of 4 sets of ATG12-ATG5 and ATG16L1 (400 kDa); this complex interacts with ATG3 leading to disruption of ATG7 interaction and promotion of ATG8-like proteins lipidation. Forms an 800-kDa complex composed of ATG12-ATG5 and ATG16L2. The ATG12-ATG5 conjugate interacts with RAB33A; this interaction is bridged by ATG16L1 and promotes ATG12-ATG5-ATG16L1 complex recruitment to phagophores. Interacts with TECPR1; the interaction is direct and does not take place when ATG16L1 is associated with the ATG5-ATG12 conjugate. Interacts with DHX58/RIG-1, IFIH1/MDA5 and MAVS/IPS-1 in monomeric form as well as in ATG12-ATG5 conjugate form. The interaction with MAVS is further enhanced upon vesicular stomatitis virus (VSV) infection. Interacts with ATG3. Interacts with ATG7 and ATG10. Interacts with FADD. Interacts with Bassoon/BSN; this interaction is important for the regulation of presynaptic autophagy. Interacts with ATG16L2. In terms of processing, conjugated to ATG12; which is essential for autophagy, but is not required for association with isolation membrane. Post-translationally, acetylated by EP300.

Its subcellular location is the cytoplasm. The protein resides in the preautophagosomal structure membrane. In terms of biological role, involved in autophagic vesicle formation. Conjugation with ATG12, through a ubiquitin-like conjugating system involving ATG7 as an E1-like activating enzyme and ATG10 as an E2-like conjugating enzyme, is essential for its function. The ATG12-ATG5 conjugate acts as an E3-like enzyme which is required for lipidation of ATG8 family proteins and their association to the vesicle membranes. Involved in mitochondrial quality control after oxidative damage, and in subsequent cellular longevity. Plays a critical role in multiple aspects of lymphocyte development and is essential for both B and T lymphocyte survival and proliferation. Required for optimal processing and presentation of antigens for MHC II. Involved in the maintenance of axon morphology and membrane structures, as well as in normal adipocyte differentiation. Promotes primary ciliogenesis through removal of OFD1 from centriolar satellites and degradation of IFT20 via the autophagic pathway. As part of the ATG8 conjugation system with ATG12 and ATG16L1, required for recruitment of LRRK2 to stressed lysosomes and induction of LRRK2 kinase activity in response to lysosomal stress. Functionally, may play an important role in the apoptotic process, possibly within the modified cytoskeleton. Its expression is a relatively late event in the apoptotic process, occurring downstream of caspase activity. Plays a crucial role in IFN-gamma-induced autophagic cell death by interacting with FADD. The protein is Autophagy protein 5 of Pongo abelii (Sumatran orangutan).